A 189-amino-acid chain; its full sequence is Elongation factor P (189 aa).

Residue K34 is modified to N6-(3,6-diaminohexanoyl)-5-hydroxylysine.

This sequence belongs to the elongation factor P family. In terms of processing, may be beta-lysylated on the epsilon-amino group of Lys-34 by the combined action of EpmA and EpmB, and then hydroxylated on the C5 position of the same residue by EpmC (if this protein is present). Lysylation is critical for the stimulatory effect of EF-P on peptide-bond formation. The lysylation moiety may extend toward the peptidyltransferase center and stabilize the terminal 3-CCA end of the tRNA. Hydroxylation of the C5 position on Lys-34 may allow additional potential stabilizing hydrogen-bond interactions with the P-tRNA.

It is found in the cytoplasm. It functions in the pathway protein biosynthesis; polypeptide chain elongation. Involved in peptide bond synthesis. Alleviates ribosome stalling that occurs when 3 or more consecutive Pro residues or the sequence PPG is present in a protein, possibly by augmenting the peptidyl transferase activity of the ribosome. Modification of Lys-34 is required for alleviation. In Idiomarina loihiensis (strain ATCC BAA-735 / DSM 15497 / L2-TR), this protein is Elongation factor P.